The chain runs to 121 residues: Chorion class A proteins Ld9 (121 aa).

Belongs to the chorion protein family.

Functionally, this protein is one of many from the eggshell of the gypsy moth. The polypeptide is Chorion class A proteins Ld9 (Lymantria dispar (Gypsy moth)).